An 83-amino-acid chain; its full sequence is Phytosulfokines 4 (83 aa).

The N-terminal stretch at 1 to 28 is a signal peptide; the sequence is MAARTVAVAAALAVLLIFAASSATVAMA. Positions 29–74 are excised as a propeptide; sequence GRPTPTTSLDEEAAQAAAQSEIGGGCKEGEGEEECLARRTLTAHTD. Tyrosine 75 and tyrosine 77 each carry sulfotyrosine. The propeptide occupies 80–83; it reads QHHN.

This sequence belongs to the phytosulfokine family. Post-translationally, sulfation is important for activity and for the binding to a putative membrane receptor. In terms of processing, PSK-alpha is produced by endopeptidase digestion. PSK-beta is produced from PSK-alpha by exopeptidase digestion.

Its subcellular location is the secreted. Its function is as follows. Promotes plant cell differentiation, organogenesis and somatic embryogenesis as well as cell proliferation. The chain is Phytosulfokines 4 (PSK4) from Oryza sativa subsp. japonica (Rice).